A 685-amino-acid chain; its full sequence is E3 ubiquitin-protein ligase RNF103 (685 aa).

4 consecutive transmembrane segments (helical) span residues 6 to 26 (FFLL…EAIV), 326 to 346 (LFVL…FITQ), 366 to 386 (LLII…LDSF), and 411 to 431 (MFYS…GLLI). Acidic residues predominate over residues 526–543 (EEMSEGSQDTENDSESEN). The disordered stretch occupies residues 526-550 (EEMSEGSQDTENDSESENTDTLSSE). The segment at 621–663 (CVVCLENFENGCLLMGLPCGHVFHQNCIVMWLAGGRHCCPVCR) adopts an RING-type zinc-finger fold.

As to quaternary structure, interacts with DERL1 and VCP. As to expression, highly expressed in the normal cerebellum but not in the cerebral cortex.

It localises to the endoplasmic reticulum membrane. It carries out the reaction S-ubiquitinyl-[E2 ubiquitin-conjugating enzyme]-L-cysteine + [acceptor protein]-L-lysine = [E2 ubiquitin-conjugating enzyme]-L-cysteine + N(6)-ubiquitinyl-[acceptor protein]-L-lysine.. It functions in the pathway protein modification; protein ubiquitination. In terms of biological role, acts as an E2-dependent E3 ubiquitin-protein ligase, probably involved in the ER-associated protein degradation pathway. The polypeptide is E3 ubiquitin-protein ligase RNF103 (RNF103) (Homo sapiens (Human)).